Here is a 2410-residue protein sequence, read N- to C-terminus: Coprinoferrin synthetase (2410 aa).

The segment at 237–646 (LERRAKTNPH…GRIDTQIKVR (410 aa)) is adenylation 1. A Carrier 1 domain is found at 783 to 860 (RDCTPLEAEV…DIAQLVHVST (78 aa)). Position 820 is an O-(pantetheine 4'-phosphoryl)serine (serine 820). Positions 891 to 1260 (DILPPFPVQE…SVEAVVNVHD (370 aa)) are condensation 1. The segment at 1298 to 1317 (ELPLPSRRSPEPVRKVNDDE) is disordered. A compositionally biased stretch (basic and acidic residues) spans 1305 to 1314 (RSPEPVRKVN). The region spanning 1324–1400 (LLDPVVVADL…RLARVVSNNK (77 aa)) is the Carrier 2 domain. Serine 1361 is subject to O-(pantetheine 4'-phosphoryl)serine. The interval 1436–1839 (IIPSTALQSG…RIGRTFSVPS (404 aa)) is condensation 2. Positions 1858–1932 (VQAGIIHPVL…DLVLQATEIK (75 aa)) constitute a Carrier 3 domain. Serine 1893 carries the O-(pantetheine 4'-phosphoryl)serine modification. A condensation 3 region spans residues 1992-2315 (FQYLFTFKLP…TPIFNVNVNV (324 aa)).

This sequence belongs to the NRP synthetase family.

It functions in the pathway siderophore biosynthesis. In terms of biological role, nonribosomal peptide synthase; part of the gene cluster that mediates the biosynthesis of coprinoferrin, an acylated tripeptide hydroxamate siderophore. The biosynthesis of coprinoferrin depends on the hydroxylation of ornithine to N(5)-hydroxyornithine, catalyzed by the monooxygenase cpf2. The second step, the acylation of N(5)-hydroxy-L-ornithine to yield N(5)-hexanoyl-N(5)-hydroxyl-L-ornithine is catalyzed by a not yet identified acyltransferase. Finally, assembly of coprinoferrin is catalyzed by the nonribosomal peptide synthase (NRPS) cpf1 via amide bond formation between three N(5)-hexanoyl-N(5)-hydroxyl-L-ornithine molecules to release the linear trimer. Interestingly, proteins seemingly not directly related to biosynthesis, such as transcription factors, replication factors, and autophagy-related proteins, are conserved among the clusters homologous to the coprinoferrin cluster, suggesting that the cluster may also play developmental and cell biological functions. This is Coprinoferrin synthetase from Coprinopsis cinerea (strain Okayama-7 / 130 / ATCC MYA-4618 / FGSC 9003) (Inky cap fungus).